The primary structure comprises 122 residues: Large ribosomal subunit protein uL14c (122 aa).

It belongs to the universal ribosomal protein uL14 family. In terms of assembly, part of the 50S ribosomal subunit.

Its subcellular location is the plastid. It localises to the chloroplast. In terms of biological role, binds to 23S rRNA. This chain is Large ribosomal subunit protein uL14c, found in Cucumis sativus (Cucumber).